Reading from the N-terminus, the 380-residue chain is Beta sliding clamp (380 aa).

This sequence belongs to the beta sliding clamp family. Forms a ring-shaped head-to-tail homodimer around DNA which binds and tethers DNA polymerases and other proteins to the DNA. The DNA replisome complex has a single clamp-loading complex (3 tau and 1 each of delta, delta', psi and chi subunits) which binds 3 Pol III cores (1 core on the leading strand and 2 on the lagging strand) each with a beta sliding clamp dimer. Additional proteins in the replisome are other copies of gamma, psi and chi, Ssb, DNA helicase and RNA primase.

The protein resides in the cytoplasm. In terms of biological role, confers DNA tethering and processivity to DNA polymerases and other proteins. Acts as a clamp, forming a ring around DNA (a reaction catalyzed by the clamp-loading complex) which diffuses in an ATP-independent manner freely and bidirectionally along dsDNA. Initially characterized for its ability to contact the catalytic subunit of DNA polymerase III (Pol III), a complex, multichain enzyme responsible for most of the replicative synthesis in bacteria; Pol III exhibits 3'-5' exonuclease proofreading activity. The beta chain is required for initiation of replication as well as for processivity of DNA replication. This Mycoplasma pneumoniae (strain ATCC 29342 / M129 / Subtype 1) (Mycoplasmoides pneumoniae) protein is Beta sliding clamp (dnaN).